The following is a 449-amino-acid chain: UDP-glycosyltransferase 74F2 (449 aa).

Residues Ser273, Ser325–Gln327, His342–Glu350, and Trp364–Gln367 contribute to the UDP-alpha-D-glucose site.

This sequence belongs to the UDP-glycosyltransferase family. In terms of tissue distribution, expressed in seedlings.

In terms of biological role, glycosyltransferase that glucosylates benzoic acid and derivatives. Substrate preference is benzoic acid &gt; salicylic acid (SA) &gt; 3-hydroxybenzoic acid &gt; 4-hydroxybenzoic acid. Catalyzes the formation of both SA 2-O-beta-D-glucoside (SAG) and SA glucose ester (SGE). Has high affinity for the tryptophan precursor anthranilate. Catalyzes the formation of anthranilate glucose ester. Is the major source of this activity in the plant. This chain is UDP-glycosyltransferase 74F2 (UGT74F2), found in Arabidopsis thaliana (Mouse-ear cress).